Here is a 474-residue protein sequence, read N- to C-terminus: MSIQAPPRLLELAGQSLLRDQALSISAMEELPRVLYLPLFREAFSRRHFQTLTVMVQAWPFTCLPLVSLMKTLHLEPLKALLEGLHMLLTQKDRPRRWKLQVLDLRDVDENFWARWPGAWALSCFPEAMSKRQTAEDCPRTGEHQPLKVFIDICLKEIPQDECLRYLFQWVYQRRGLVHLCCSKLVNYLTPIKYLRKSLKIIYINSIGELEIHNTCWPHLIRKLYCYLKEMKTLCKLVFSRCHHYTSDNELEGWLVTRFTSVFLRLEHLQLLKIKLITFFSGHLEQLIRCLQNPLENLELTCGNLLEEDLKCLSQFPSLGYLKHLNLSYVLLFRISLEPLGALLEKIAASLETLVLEGCQIHYSQLSAILPGLSCCSQLTTFYFGSNCMSIDALKDLLRHTSGLSKLSLETYPAPEESLNSLVRVNWEIFTPLRAELMCTLREFRQPKRIFIGPTPCPSCGSSPSEELELHLCC.

The stretch at 97–124 (RWKLQVLDLRDVDENFWARWPGAWALSC) is one LRR 1; degenerate repeat. The LRR 2; degenerate repeat unit spans residues 179 to 203 (HLCCSKLVNYLTPIKYLRKSLKIIY). Residues 204-230 (INSIGELEIHNTCWPHLIRKLYCYLKE) form an LRR 3; degenerate repeat. The LRR 4; degenerate repeat unit spans residues 231–265 (MKTLCKLVFSRCHHYTSDNELEGWLVTRFTSVFLR). 5 LRR repeats span residues 266–291 (LEHL…IRCL), 292–323 (QNPL…GYLK), 324–342 (HLNL…PLGA), 348–375 (AASL…GLSC), and 376–400 (CSQL…LLRH).

It belongs to the PRAME family.

The chain is PRAME family member 2 from Homo sapiens (Human).